A 63-amino-acid chain; its full sequence is Large ribosomal subunit protein bL28 (63 aa).

This sequence belongs to the bacterial ribosomal protein bL28 family.

The sequence is that of Large ribosomal subunit protein bL28 from Hydrogenobaculum sp. (strain Y04AAS1).